The sequence spans 476 residues: Aspartyl/glutamyl-tRNA(Asn/Gln) amidotransferase subunit B (476 aa).

It belongs to the GatB/GatE family. GatB subfamily. In terms of assembly, heterotrimer of A, B and C subunits.

It catalyses the reaction L-glutamyl-tRNA(Gln) + L-glutamine + ATP + H2O = L-glutaminyl-tRNA(Gln) + L-glutamate + ADP + phosphate + H(+). It carries out the reaction L-aspartyl-tRNA(Asn) + L-glutamine + ATP + H2O = L-asparaginyl-tRNA(Asn) + L-glutamate + ADP + phosphate + 2 H(+). In terms of biological role, allows the formation of correctly charged Asn-tRNA(Asn) or Gln-tRNA(Gln) through the transamidation of misacylated Asp-tRNA(Asn) or Glu-tRNA(Gln) in organisms which lack either or both of asparaginyl-tRNA or glutaminyl-tRNA synthetases. The reaction takes place in the presence of glutamine and ATP through an activated phospho-Asp-tRNA(Asn) or phospho-Glu-tRNA(Gln). The chain is Aspartyl/glutamyl-tRNA(Asn/Gln) amidotransferase subunit B from Clostridium botulinum (strain Alaska E43 / Type E3).